We begin with the raw amino-acid sequence, 201 residues long: MAKKKQAGRRVEGWKAKSWFKVYTPDNLGKAYIGDTIASEVETVKGRIMQATLGEITNDYAKQHIKMSFKIAEVTGDAAYTEFVGHEVTRDYLRSLVKRRSSRIDCHVQVVTKDNKKVRLTISCYTFARANIAQEHALRNAITAGLVAQAQAWDLNTLVNGVVSGEISKDLFKLVKTLYPTRRVEIIKSKVEQVAAPVSTA.

The protein belongs to the eukaryotic ribosomal protein eS1 family.

This is Small ribosomal subunit protein eS1 from Methanoregula boonei (strain DSM 21154 / JCM 14090 / 6A8).